The sequence spans 373 residues: Alanine racemase (373 aa).

K40 acts as the Proton acceptor; specific for D-alanine in catalysis. K40 is subject to N6-(pyridoxal phosphate)lysine. R140 lines the substrate pocket. The active-site Proton acceptor; specific for L-alanine is the Y268. M315 is a substrate binding site.

It belongs to the alanine racemase family. Pyridoxal 5'-phosphate serves as cofactor.

It carries out the reaction L-alanine = D-alanine. It functions in the pathway amino-acid biosynthesis; D-alanine biosynthesis; D-alanine from L-alanine: step 1/1. Its function is as follows. Catalyzes the interconversion of L-alanine and D-alanine. May also act on other amino acids. In Limosilactobacillus fermentum (strain NBRC 3956 / LMG 18251) (Lactobacillus fermentum), this protein is Alanine racemase (alr).